The primary structure comprises 227 residues: tRNA (guanine-N(7)-)-methyltransferase (227 aa).

S-adenosyl-L-methionine contacts are provided by Glu58, Glu83, Asp110, and Asp132. Asp132 is a catalytic residue. Substrate is bound by residues Lys136, Asp168, and 205-208 (TRFE).

Belongs to the class I-like SAM-binding methyltransferase superfamily. TrmB family.

The enzyme catalyses guanosine(46) in tRNA + S-adenosyl-L-methionine = N(7)-methylguanosine(46) in tRNA + S-adenosyl-L-homocysteine. Its pathway is tRNA modification; N(7)-methylguanine-tRNA biosynthesis. In terms of biological role, catalyzes the formation of N(7)-methylguanine at position 46 (m7G46) in tRNA. The protein is tRNA (guanine-N(7)-)-methyltransferase of Acidithiobacillus ferrooxidans (strain ATCC 23270 / DSM 14882 / CIP 104768 / NCIMB 8455) (Ferrobacillus ferrooxidans (strain ATCC 23270)).